Consider the following 322-residue polypeptide: UDP-N-acetylenolpyruvoylglucosamine reductase (322 aa).

Residues 36 to 202 (RAGGPAQVLF…TSVLFEGVPG (167 aa)) enclose the FAD-binding PCMH-type domain. Residue arginine 182 is part of the active site. Serine 231 serves as the catalytic Proton donor. Residue glutamate 301 is part of the active site.

The protein belongs to the MurB family. FAD is required as a cofactor.

The protein localises to the cytoplasm. The catalysed reaction is UDP-N-acetyl-alpha-D-muramate + NADP(+) = UDP-N-acetyl-3-O-(1-carboxyvinyl)-alpha-D-glucosamine + NADPH + H(+). Its pathway is cell wall biogenesis; peptidoglycan biosynthesis. Its function is as follows. Cell wall formation. This chain is UDP-N-acetylenolpyruvoylglucosamine reductase, found in Brucella suis (strain ATCC 23445 / NCTC 10510).